Consider the following 528-residue polypeptide: Tyrosine--tRNA ligase, cytoplasmic (528 aa).

Met1 bears the N-acetylmethionine mark. Gly2 is modified (N-acetylglycine; in Tyrosine--tRNA ligase, cytoplasmic, N-terminally processed). Position 39 (Tyr39) interacts with L-tyrosine. Trans-resveratrol is bound at residue Tyr39. A 'HIGH' region motif is present at residues 44–52; the sequence is TTGKPHVAY. Positions 166, 170, 173, and 188 each coordinate L-tyrosine. Trans-resveratrol-binding residues include Gln170 and Asp173. The residue at position 197 (Lys197) is an N6-acetyllysine. Ser205 is subject to Phosphoserine. N6-acetyllysine is present on Lys206. A 'KMSKS' region motif is present at residues 222–226; sequence KMSSS. Positions 242 to 247 match the Nuclear localization signal motif; the sequence is KKKLKK. Residues 339 to 363 form a disordered region; sequence AAYPDPSKQKPMAKGPAKNSEPEEV. Residues 364–468 form the tRNA-binding domain; sequence IPSRLDIRVG…AGSAPGERVF (105 aa). Ser386 carries the post-translational modification Phosphoserine. An N6-acetyllysine mark is found at Lys474, Lys482, and Lys490.

Belongs to the class-I aminoacyl-tRNA synthetase family. As to quaternary structure, homodimer. Interacts (when binding to resveratrol) with PARP1; interaction stimulates the poly-ADP-ribosyltransferase activity of PARP1.

It localises to the cytoplasm. The protein resides in the nucleus. It carries out the reaction tRNA(Tyr) + L-tyrosine + ATP = L-tyrosyl-tRNA(Tyr) + AMP + diphosphate + H(+). Its activity is regulated as follows. Resveratrol strongly inhibits the tyrosine--tRNA ligase activity. Tyrosine--tRNA ligase that catalyzes the attachment of tyrosine to tRNA(Tyr) in a two-step reaction: tyrosine is first activated by ATP to form Tyr-AMP and then transferred to the acceptor end of tRNA(Tyr). Also acts as a positive regulator of poly-ADP-ribosylation in the nucleus, independently of its tyrosine--tRNA ligase activity. Activity is switched upon resveratrol-binding: resveratrol strongly inhibits the tyrosine--tRNA ligase activity and promotes relocalization to the nucleus, where YARS1 specifically stimulates the poly-ADP-ribosyltransferase activity of PARP1. The polypeptide is Tyrosine--tRNA ligase, cytoplasmic (YARS1) (Pongo abelii (Sumatran orangutan)).